The following is a 294-amino-acid chain: Phosphoribosylaminoimidazole-succinocarboxamide synthase (294 aa).

This sequence belongs to the SAICAR synthetase family.

It catalyses the reaction 5-amino-1-(5-phospho-D-ribosyl)imidazole-4-carboxylate + L-aspartate + ATP = (2S)-2-[5-amino-1-(5-phospho-beta-D-ribosyl)imidazole-4-carboxamido]succinate + ADP + phosphate + 2 H(+). It functions in the pathway purine metabolism; IMP biosynthesis via de novo pathway; 5-amino-1-(5-phospho-D-ribosyl)imidazole-4-carboxamide from 5-amino-1-(5-phospho-D-ribosyl)imidazole-4-carboxylate: step 1/2. The polypeptide is Phosphoribosylaminoimidazole-succinocarboxamide synthase (Rhodococcus jostii (strain RHA1)).